The primary structure comprises 75 residues: Protein SlyX homolog (75 aa).

The protein belongs to the SlyX family.

The sequence is that of Protein SlyX homolog from Vibrio vulnificus (strain CMCP6).